A 405-amino-acid chain; its full sequence is Plasma serine protease inhibitor (405 aa).

Positions 1-19 (MRFFPILCLVLFISHGVAS) are cleaved as a signal peptide. Positions 20 to 24 (RRHSH) are cleaved as a propeptide — removed in mature form. Residue N247 is glycosylated (N-linked (GlcNAc...) asparagine).

The protein belongs to the serpin family. Forms protease inhibiting heterodimers in extracellular body fluids with serine proteases such as activated protein C/coagulation factor V/F5, acrosin/ACR, chymotrypsinogen B/CTRB1, prothrombin/F2, factor Xa/F10, factor XI/F11, kallikrein/KLKB1, tissue kallikrein, trypsin/PRSS1, prostate specific antigen/KLK3, tissue plasminogen activator/PLAT and urinary plasminogen activator/PLAU. Forms membrane-anchored serine proteases inhibiting heterodimers with TMPRSS7 and TMPRSS11E. Interacts with SEMG2. N-glycosylated; glycans consist of a mixture of sialylated bi- (including sialyl-Lewis X epitopes), tri- and tetra-antennary complex-type chains; affects the maximal heparin- and thrombomodulin-enhanced rates of thrombin inhibition. O-glycosylated; further modified with 2 sialic acid residues. Proteolytically cleaved at the N-terminus; inhibits slightly the heparin- and thrombomodulin-enhanced rates of thrombin inhibition. Post-translationally, proteolytically cleaved. Inhibition of proteases is accompanied by formation of a stable enzyme-inhibitor complex and by degradation of the serpin to lower molecular weight derivatives. As to expression, not detected in blood plasma (at protein level). Expressed in testis, epididymis, seminal vesicles, prostate and ovaries.

The protein localises to the secreted. The protein resides in the extracellular space. Its activity is regulated as follows. Its inhibitory activity is greatly enhanced in the presence of glycosaminoglycans, heparin, thrombomodulin and phospholipids vesicles. Heparin-dependent serine protease inhibitor acting in body fluids and secretions. Inactivates serine proteases by binding irreversibly to their serine activation site. Involved in the regulation of intravascular and extravascular proteolytic activities. Plays hemostatic roles in the blood plasma. Acts as a procoagulant and pro-inflammatory factor by inhibiting the anticoagulant activated protein C factor as well as the generation of activated protein C factor by the thrombin/thrombomodulin complex. Acts as an anticoagulant factor by inhibiting blood coagulation factors like prothrombin, factor XI, factor Xa, plasma kallikrein and fibrinolytic enzymes such as tissue- and urinary-type plasminogen activators. In seminal plasma, inactivates several serine proteases implicated in the reproductive system. Inhibits the serpin acrosin; indirectly protects component of the male genital tract from being degraded by excessive released acrosin. Inhibits tissue- and urinary-type plasminogen activator, prostate-specific antigen and kallikrein activities; has a control on the sperm motility and fertilization. Inhibits the activated protein C-catalyzed degradation of SEMG1 and SEMG2; regulates the degradation of semenogelin during the process of transfer of spermatozoa from the male reproductive tract into the female tract. In urine, inhibits urinary-type plasminogen activator and kallikrein activities. Inactivates membrane-anchored serine proteases activities such as MPRSS7 and TMPRSS11E. Inhibits urinary-type plasminogen activator-dependent tumor cell invasion and metastasis. May also play a non-inhibitory role in seminal plasma and urine as a hydrophobic hormone carrier by its binding to retinoic acid. The chain is Plasma serine protease inhibitor (Serpina5) from Mus musculus (Mouse).